The primary structure comprises 114 residues: Photosystem II reaction center Psb28 protein (114 aa).

It belongs to the Psb28 family. Part of the photosystem II complex.

The protein resides in the plastid. It is found in the chloroplast thylakoid membrane. In Thalassiosira pseudonana (Marine diatom), this protein is Photosystem II reaction center Psb28 protein.